Consider the following 203-residue polypeptide: Ribosomal RNA small subunit methyltransferase G (203 aa).

S-adenosyl-L-methionine is bound by residues glycine 75, leucine 80, 126–127, and arginine 141; that span reads VE.

This sequence belongs to the methyltransferase superfamily. RNA methyltransferase RsmG family.

The protein resides in the cytoplasm. The enzyme catalyses guanosine(527) in 16S rRNA + S-adenosyl-L-methionine = N(7)-methylguanosine(527) in 16S rRNA + S-adenosyl-L-homocysteine. Its function is as follows. Specifically methylates the N7 position of guanine in position 527 of 16S rRNA. The polypeptide is Ribosomal RNA small subunit methyltransferase G (Ruthia magnifica subsp. Calyptogena magnifica).